The chain runs to 299 residues: Bifunctional protein FolD (299 aa).

NADP(+)-binding positions include 164-166 (GRS) and isoleucine 234.

The protein belongs to the tetrahydrofolate dehydrogenase/cyclohydrolase family. As to quaternary structure, homodimer.

It catalyses the reaction (6R)-5,10-methylene-5,6,7,8-tetrahydrofolate + NADP(+) = (6R)-5,10-methenyltetrahydrofolate + NADPH. The catalysed reaction is (6R)-5,10-methenyltetrahydrofolate + H2O = (6R)-10-formyltetrahydrofolate + H(+). The protein operates within one-carbon metabolism; tetrahydrofolate interconversion. Its function is as follows. Catalyzes the oxidation of 5,10-methylenetetrahydrofolate to 5,10-methenyltetrahydrofolate and then the hydrolysis of 5,10-methenyltetrahydrofolate to 10-formyltetrahydrofolate. This is Bifunctional protein FolD from Christiangramia forsetii (strain DSM 17595 / CGMCC 1.15422 / KT0803) (Gramella forsetii).